We begin with the raw amino-acid sequence, 298 residues long: Urease accessory protein UreD (298 aa).

The protein belongs to the UreD family. In terms of assembly, ureD, UreF and UreG form a complex that acts as a GTP-hydrolysis-dependent molecular chaperone, activating the urease apoprotein by helping to assemble the nickel containing metallocenter of UreC. The UreE protein probably delivers the nickel.

The protein localises to the cytoplasm. Functionally, required for maturation of urease via the functional incorporation of the urease nickel metallocenter. The polypeptide is Urease accessory protein UreD (Frankia alni (strain DSM 45986 / CECT 9034 / ACN14a)).